Reading from the N-terminus, the 262-residue chain is Phosphomannomutase 1 (262 aa).

Ala-2 bears the N-acetylalanine mark. Asp-19 acts as the Nucleophile in catalysis. Positions 19 and 21 each coordinate Mg(2+). Asp-21 (proton donor/acceptor) is an active-site residue. Alpha-D-mannose 1-phosphate is bound by residues Arg-28, Arg-132, Arg-143, Arg-150, Met-186, Ser-188, and Asp-190. The Mg(2+) site is built by Asn-218, Phe-230, Asp-232, and Thr-235. Ser-242 carries the post-translational modification Phosphoserine.

This sequence belongs to the eukaryotic PMM family. Homodimer. Mg(2+) serves as cofactor. In terms of tissue distribution, strong expression in liver, heart, brain, and pancreas; lower expression in skeletal muscle.

The protein resides in the cytoplasm. The catalysed reaction is alpha-D-mannose 1-phosphate = D-mannose 6-phosphate. Its pathway is nucleotide-sugar biosynthesis; GDP-alpha-D-mannose biosynthesis; alpha-D-mannose 1-phosphate from D-fructose 6-phosphate: step 2/2. Its activity is regulated as follows. IMP, a metabolite whose concentration is elevated in anoxia, inhibits phosphomannomutase and phosphoglucomutase activities and strongly enhances glucose-1,6-bisphosphatase activity. Functionally, involved in the synthesis of the GDP-mannose and dolichol-phosphate-mannose required for a number of critical mannosyl transfer reactions. In addition, may be responsible for the degradation of glucose-1,6-bisphosphate in ischemic brain. This is Phosphomannomutase 1 (PMM1) from Homo sapiens (Human).